Here is a 66-residue protein sequence, read N- to C-terminus: Cocaine- and amphetamine-regulated transcript protein (66 aa).

Intrachain disulfides connect cysteine 34–cysteine 52 and cysteine 40–cysteine 60.

Belongs to the CART family.

It localises to the secreted. Satiety factor closely associated with the actions of leptin and neuropeptide y; this anorectic peptide inhibits both normal and starvation-induced feeding and completely blocks the feeding response induced by neuropeptide Y and regulated by leptin in the hypothalamus. The polypeptide is Cocaine- and amphetamine-regulated transcript protein (CARTPT) (Sus scrofa (Pig)).